The sequence spans 783 residues: MSRRRAHDTEDESYDHRRNKRRRVSENQEIEDRLESLILRVGERSTSSVESNLEGLVSVLEADLGTFRLKILRILSDCAVRMPEKCTVYTTLVGLLNAKNYKFGGEFVDYMVKTFKESLKLCRWDAARYSLRFLADLVNCHVISATSLLQLLDTIIDVSNEDTVPQVRRDWFVFAVLSTLPWVGRDLYEKKESALESLLLRIEVYLNKRSKKHHNALRVWSSDAPHPQEEYLDCLWAQIRKLRQDNWAEKHIPRPYLVFDAILCEALQHNLPQITPPPHHDAIEYPMPWVVYRMFDYTDCPDGPNLPGAHSIERFLIEEHLHHIIETHHHERKDCAAQLLNFPFKHKIPLEYCIVEVIFAELFHMPTPRYLDICYGSILIELCKLQPGTLPQVLAQATEILFMRIDSMNTSCFDRFVNWFSYHLSNFKFTWSWDEWDSCLLLDAEHPRPKFIQEVLQKCLRLSYHQRITEMMPTTYAKLIPVMPVPNYKYTSEEAANLPGTTVALQLVGAIRQKCTPEEVVNILKEIPSSGYSGEEMSDGSFNALKIDFCGQSKFHVVFRALAETEEAQICILHNIFELWSSHQQMMVVLIDKLLKLQIVDCSAVATWIFSKEMTGEFTKMYLWEILHLTIKKMNKHVIKLDTELDNAKEKLSKADSSSSDTDEDTPHKRKKPITHADKPSEEVVERMEEKLEAANVNQKRLFLIVFQRFIMILSEHLLRSDTDGRDPDTDWYRWTIGRLQQVFLMHHEQVQKYSSTLETLLFTSDLDSHILEVFQQFVALRA.

Residues 1 to 25 (MSRRRAHDTEDESYDHRRNKRRRVS) form a disordered region. Thr-9 carries the phosphothreonine modification. An MIF4G domain is found at 31–243 (EDRLESLILR…CLWAQIRKLR (213 aa)). The segment at 652–683 (LSKADSSSSDTDEDTPHKRKKPITHADKPSEE) is disordered.

It belongs to the NCBP1 family. Component of the nuclear cap-binding complex (CBC), a heterodimer composed of Cbp80 and Cbp20 that interacts with m7GpppG-capped RNA.

It is found in the nucleus. Component of the cap-binding complex (CBC), which binds cotranscriptionally to the 5'-cap of pre-mRNAs and is involved in various processes such as pre-mRNA splicing and RNA-mediated gene silencing (RNAi). The CBC complex is involved in miRNA-mediated RNA interference via its interaction with Ars2 and is required for primary microRNAs (miRNAs) processing. Also involved in innate immunity via the short interfering RNAs (siRNAs) processing machinery by restricting the viral RNA production. In the CBC complex, Cbp80 does not bind directly capped RNAs (m7GpppG-capped RNA) but is required to stabilize the movement of the N-terminal loop of Cbp20 and lock the CBC into a high affinity cap-binding state with the cap structure. The polypeptide is Nuclear cap-binding protein subunit 1 (Cbp80) (Drosophila virilis (Fruit fly)).